Consider the following 254-residue polypeptide: Dihydroorotate dehydrogenase B (NAD(+)), electron transfer subunit (254 aa).

Residues 1–99 form the FAD-binding FR-type domain; that stretch reads MLQTEMKVIQ…LGPLGKGFDI (99 aa). FAD is bound by residues 50 to 53, 67 to 69, and 74 to 75; these read RPIS, LYR, and GT. The [2Fe-2S] cluster site is built by Cys218, Cys223, Cys226, and Cys241.

The protein belongs to the PyrK family. Heterotetramer of 2 PyrK and 2 PyrD type B subunits. [2Fe-2S] cluster serves as cofactor. Requires FAD as cofactor.

The protein operates within pyrimidine metabolism; UMP biosynthesis via de novo pathway; orotate from (S)-dihydroorotate (NAD(+) route): step 1/1. Its function is as follows. Responsible for channeling the electrons from the oxidation of dihydroorotate from the FMN redox center in the PyrD type B subunit to the ultimate electron acceptor NAD(+). In Listeria welshimeri serovar 6b (strain ATCC 35897 / DSM 20650 / CCUG 15529 / CIP 8149 / NCTC 11857 / SLCC 5334 / V8), this protein is Dihydroorotate dehydrogenase B (NAD(+)), electron transfer subunit.